An 810-amino-acid chain; its full sequence is Plasminogen (810 aa).

Residues 1–19 (MEHKEVVLLLLLFLKSGQG) form the signal peptide. The PAN domain occupies 20–98 (EPLDDYVNTQ…RDVVLFEKKV (79 aa)). Cystine bridges form between Cys49–Cys73, Cys53–Cys61, Cys103–Cys181, Cys124–Cys164, Cys152–Cys176, Cys185–Cys262, Cys188–Cys316, Cys206–Cys245, Cys234–Cys257, Cys275–Cys352, Cys296–Cys335, and Cys324–Cys347. 3 consecutive Kringle domains span residues 103–181 (CKTG…IPEC), 184–262 (ACMH…IPRC), and 275–352 (CLKG…IPSC). The tract at residues 126 to 145 (KWSSTSPHRPRFSPATHPSE) is disordered. L-lysine-binding residues include Arg136, Asp158, and Arg172. Thr365 is a glycosylation site (O-linked (GalNAc...) threonine). 9 cysteine pairs are disulfide-bonded: Cys377/Cys454, Cys398/Cys437, Cys426/Cys449, Cys481/Cys560, Cys502/Cys543, Cys531/Cys555, Cys567/Cys685, Cys577/Cys585, and Cys607/Cys623. Kringle domains lie at 377-454 (CYHG…LKKC) and 481-560 (CMFG…VPQC). Positions 432 and 445 each coordinate L-lysine. Residues 581 to 808 (VVGGCVANAH…FVTWIEGVMR (228 aa)) form the Peptidase S1 domain. Residue Ser597 is modified to Phosphoserine. Catalysis depends on charge relay system residues His622 and Asp665. Ser688 is subject to Phosphoserine. 3 disulfides stabilise this stretch: Cys699-Cys766, Cys729-Cys745, and Cys756-Cys784. Ser760 functions as the Charge relay system in the catalytic mechanism.

Belongs to the peptidase S1 family. Plasminogen subfamily. Interacts with CSPG4 and AMOT. Interacts (via the Kringle domains) with HRG; the interaction tethers PLG to the cell surface and enhances its activation. Interacts (via Kringle 4 domain) with ADA; the interaction stimulates PLG activation when in complex with DPP4. Angiostatin: Interacts with ATP5F1A; the interaction inhibits most of the angiogenic effects of angiostatin. In terms of processing, in the presence of the inhibitor, the activation involves only cleavage after Arg-580, yielding two chains held together by two disulfide bonds. In the absence of the inhibitor, the activation involves additionally the removal of the activation peptide.

Its subcellular location is the secreted. It catalyses the reaction Preferential cleavage: Lys-|-Xaa &gt; Arg-|-Xaa, higher selectivity than trypsin. Converts fibrin into soluble products.. Its activity is regulated as follows. Converted into plasmin by plasminogen activators, both plasminogen and its activator being bound to fibrin. Activated with catalytic amounts of streptokinase. Functionally, plasmin dissolves the fibrin of blood clots and acts as a proteolytic factor in a variety of other processes including embryonic development, tissue remodeling, tumor invasion, and inflammation. In ovulation, weakens the walls of the Graafian follicle. It activates the urokinase-type plasminogen activator, collagenases and several complement zymogens, such as C1, C4 and C5. Cleavage of fibronectin and laminin leads to cell detachment and apoptosis. Also cleaves fibrin, thrombospondin and von Willebrand factor. Its role in tissue remodeling and tumor invasion may be modulated by CSPG4. Binds to cells. This chain is Plasminogen (PLG), found in Pongo abelii (Sumatran orangutan).